A 329-amino-acid chain; its full sequence is Adenylate isopentenyltransferase 7, mitochondrial (329 aa).

The transit peptide at 1–40 (MKFSISSLKQVQPILCFKNKLSKVNVNSFLHPKEKVIFVM) directs the protein to the mitochondrion. Residue 41 to 48 (GATGSGKS) participates in ATP binding.

This sequence belongs to the IPP transferase family. Expressed in both the vascular stele and the phloem companion cells of the root, in endodermis of the root elongation zone, trichomes on young leaves, and some pollen tubes.

The protein resides in the mitochondrion. The catalysed reaction is dimethylallyl diphosphate + ADP = N(6)-(dimethylallyl)adenosine 5'-diphosphate + diphosphate. The enzyme catalyses dimethylallyl diphosphate + ATP = N(6)-(dimethylallyl)adenosine 5'-triphosphate + diphosphate. Involved in cytokinin biosynthesis. Catalyzes the transfer of an isopentenyl group from dimethylallyl diphosphate (DMAPP) to ATP and ADP. This Arabidopsis thaliana (Mouse-ear cress) protein is Adenylate isopentenyltransferase 7, mitochondrial (IPT7).